Consider the following 85-residue polypeptide: Major outer membrane protein 1 (85 aa).

The signal sequence occupies residues 1–18 (MEAREVEEMRRSRLLTLG). A helical transmembrane segment spans residues 22 to 42 (YTAVIALAALVLVMGALGLVL).

As to quaternary structure, forms extremely stable complexes with apparent masses of 150, 50, 45 and 38 kDa. Found in a ring-shaped complex of 7 nm diameter with a 2 nm channel through the middle. Complete denaturation requires temperatures over 110 degrees Celsius.

It is found in the cell outer membrane. Functionally, the most abundant protein of the outer membrane, it forms a pore through it. This Ignicoccus hospitalis (strain KIN4/I / DSM 18386 / JCM 14125) protein is Major outer membrane protein 1 (ihomp1).